Consider the following 137-residue polypeptide: Large ribosomal subunit protein uL16 (137 aa).

Belongs to the universal ribosomal protein uL16 family. In terms of assembly, part of the 50S ribosomal subunit.

In terms of biological role, binds 23S rRNA and is also seen to make contacts with the A and possibly P site tRNAs. In Magnetococcus marinus (strain ATCC BAA-1437 / JCM 17883 / MC-1), this protein is Large ribosomal subunit protein uL16.